Here is a 250-residue protein sequence, read N- to C-terminus: Probable dihydroorotate dehydrogenase B (NAD(+)), electron transfer subunit (250 aa).

Positions 1-89 (MINLKIEENV…RGPYGNGFDV (89 aa)) constitute an FAD-binding FR-type domain. The [2Fe-2S] cluster site is built by cysteine 200, cysteine 205, cysteine 208, and cysteine 216.

This sequence belongs to the PyrK family. As to quaternary structure, heterotetramer of 2 PyrK and 2 PyrD type B subunits. It depends on [2Fe-2S] cluster as a cofactor. FAD serves as cofactor.

The protein operates within pyrimidine metabolism; UMP biosynthesis via de novo pathway; orotate from (S)-dihydroorotate (NAD(+) route): step 1/1. In terms of biological role, responsible for channeling the electrons from the oxidation of dihydroorotate from the FMN redox center in the PyrD type B subunit to the ultimate electron acceptor NAD(+). The polypeptide is Probable dihydroorotate dehydrogenase B (NAD(+)), electron transfer subunit (Thermoplasma volcanium (strain ATCC 51530 / DSM 4299 / JCM 9571 / NBRC 15438 / GSS1)).